Consider the following 608-residue polypeptide: Chaperone protein HtpG (608 aa).

Positions 1–332 (MQFQTEVNQL…VEDLPLNVSR (332 aa)) are a; substrate-binding. A b region spans residues 333–536 (EILQENQILK…KNKPDFAMQQ (204 aa)). Residues 537–608 (LLKQMGQEQN…LTKIINKAFS (72 aa)) form a c region.

This sequence belongs to the heat shock protein 90 family. In terms of assembly, homodimer.

The protein localises to the cytoplasm. In terms of biological role, molecular chaperone. Has ATPase activity. The sequence is that of Chaperone protein HtpG from Campylobacter jejuni subsp. jejuni serotype O:2 (strain ATCC 700819 / NCTC 11168).